A 322-amino-acid polypeptide reads, in one-letter code: Protein lin-56 (322 aa).

The disordered stretch occupies residues 264-322 (SSQKLQQNGFPEKVEQMDKYSNKLKDEASDKKYEKPGKKDYVEEEGYWAPITDSEDDEA). Residues 275–304 (EKVEQMDKYSNKLKDEASDKKYEKPGKKDY) are compositionally biased toward basic and acidic residues.

As to expression, widely expressed throughout embryonic development. Expressed in the six multipotent ventral ectodermal blast cells, P3.p-P8.p, which generate the vulva and in their descendants throughout vulval development.

It localises to the nucleus. Functionally, required for translation, stability and/or localization of lin-15a. In Caenorhabditis elegans, this protein is Protein lin-56 (lin-56).